A 458-amino-acid polypeptide reads, in one-letter code: Carboxypeptidase N catalytic chain (458 aa).

Residues 1–20 form the signal peptide; that stretch reads MSDLLSVFLHLLLLFKLVAP. The region spanning 24 to 338 is the Peptidase M14 domain; sequence RHHRYDDLVR…EALIQFLEQV (315 aa). A disulfide bond links Cys-42 and Cys-104. Zn(2+) contacts are provided by His-86, Glu-89, and His-216. Cys-271 and Cys-311 form a disulfide bridge. Glu-308 serves as the catalytic Proton donor/acceptor. O-linked (GalNAc...) threonine glycans are attached at residues Thr-400, Thr-402, and Thr-409. Residues 423 to 458 form a disordered region; that stretch reads SPVRRAPSRRHGVRAKVQPQARKKEMEMRQLQRGPA.

Belongs to the peptidase M14 family. Tetramer of two catalytic chains and two glycosylated inactive chains. Requires Zn(2+) as cofactor. As to expression, synthesized in the liver and secreted in plasma.

Its subcellular location is the secreted. The protein resides in the extracellular space. It catalyses the reaction Release of a C-terminal basic amino acid, preferentially lysine.. In terms of biological role, protects the body from potent vasoactive and inflammatory peptides containing C-terminal Arg or Lys (such as kinins or anaphylatoxins) which are released into the circulation. The sequence is that of Carboxypeptidase N catalytic chain (CPN1) from Homo sapiens (Human).